The following is a 156-amino-acid chain: Small ribosomal subunit protein uS7 (156 aa).

This sequence belongs to the universal ribosomal protein uS7 family. In terms of assembly, part of the 30S ribosomal subunit. Contacts proteins S9 and S11.

In terms of biological role, one of the primary rRNA binding proteins, it binds directly to 16S rRNA where it nucleates assembly of the head domain of the 30S subunit. Is located at the subunit interface close to the decoding center, probably blocks exit of the E-site tRNA. The protein is Small ribosomal subunit protein uS7 of Bartonella henselae (strain ATCC 49882 / DSM 28221 / CCUG 30454 / Houston 1) (Rochalimaea henselae).